A 246-amino-acid polypeptide reads, in one-letter code: tRNA pseudouridine synthase A (246 aa).

Asp52 (nucleophile) is an active-site residue. Position 111 (Tyr111) interacts with substrate.

This sequence belongs to the tRNA pseudouridine synthase TruA family. Homodimer.

The catalysed reaction is uridine(38/39/40) in tRNA = pseudouridine(38/39/40) in tRNA. Its function is as follows. Formation of pseudouridine at positions 38, 39 and 40 in the anticodon stem and loop of transfer RNAs. The protein is tRNA pseudouridine synthase A of Fervidobacterium nodosum (strain ATCC 35602 / DSM 5306 / Rt17-B1).